An 833-amino-acid polypeptide reads, in one-letter code: Leucine--tRNA ligase (833 aa).

The 'HIGH' region motif lies at 41–52; that stretch reads PYPSGAGLHVGH. Positions 610-614 match the 'KMSKS' region motif; that stretch reads KMSKS. Residue Lys-613 participates in ATP binding.

This sequence belongs to the class-I aminoacyl-tRNA synthetase family.

It localises to the cytoplasm. It catalyses the reaction tRNA(Leu) + L-leucine + ATP = L-leucyl-tRNA(Leu) + AMP + diphosphate. The protein is Leucine--tRNA ligase of Streptococcus pneumoniae (strain ATCC 700669 / Spain 23F-1).